Here is a 280-residue protein sequence, read N- to C-terminus: Urease accessory protein UreD (280 aa).

Belongs to the UreD family. UreD, UreF and UreG form a complex that acts as a GTP-hydrolysis-dependent molecular chaperone, activating the urease apoprotein by helping to assemble the nickel containing metallocenter of UreC. The UreE protein probably delivers the nickel.

It is found in the cytoplasm. Required for maturation of urease via the functional incorporation of the urease nickel metallocenter. This chain is Urease accessory protein UreD, found in Mesorhizobium japonicum (strain LMG 29417 / CECT 9101 / MAFF 303099) (Mesorhizobium loti (strain MAFF 303099)).